The primary structure comprises 169 residues: Putative phosphoesterase SAR0985 (169 aa).

His34 acts as the Proton donor in catalysis. 2 short sequence motifs (HXTX) span residues 34–37 (HVTI) and 115–118 (HFTI). His115 functions as the Proton acceptor in the catalytic mechanism.

Belongs to the 2H phosphoesterase superfamily. YjcG family.

The polypeptide is Putative phosphoesterase SAR0985 (Staphylococcus aureus (strain MRSA252)).